Consider the following 453-residue polypeptide: Cyclic GMP-AMP phosphodiesterase SMPDL3A (453 aa).

The N-terminal stretch at 1-22 is a signal peptide; the sequence is MALVRALVCCLLTAWHCRSGLG. 2 residues coordinate Zn(2+): Asp45 and His47. A disulfide bond links Cys62 and Cys81. A glycan (N-linked (GlcNAc...) asparagine) is linked at Asn69. Asp110 is a Zn(2+) binding site. Residue His114 participates in ATP binding. An N-linked (GlcNAc...) asparagine glycan is attached at Asn131. Position 151 (Asn151) interacts with Zn(2+). Residues Asn151 and His152 each coordinate ATP. Asn222 and Asn238 each carry an N-linked (GlcNAc...) asparagine glycan. His252 is a binding site for Zn(2+). Asn263 carries an N-linked (GlcNAc...) asparagine glycan. Positions 293 and 295 each coordinate Zn(2+). N-linked (GlcNAc...) asparagine glycosylation occurs at Asn356. 2 cysteine pairs are disulfide-bonded: Cys420-Cys424 and Cys430-Cys443. Asn437 is a glycosylation site (N-linked (GlcNAc...) asparagine).

It belongs to the acid sphingomyelinase family. In terms of assembly, monomer. Homodimer; homodimerizes following 2',3'-cGAMP-binding. Zn(2+) is required as a cofactor. N-glycosylation is required for protein maturation, secretion and phosphodiesterase activity. In terms of tissue distribution, detected in blood serum. Detected in macrophages (at protein level).

The protein resides in the secreted. The catalysed reaction is 2',3'-cGAMP + H2O = 5'-pGpA(2'-5') + H(+). The enzyme catalyses 5'-pGpA(2'-5') + H2O = 5'-GpA(2'-5') + phosphate. It catalyses the reaction a ribonucleoside 5'-triphosphate + H2O = a ribonucleoside 5'-diphosphate + phosphate + H(+). It carries out the reaction ATP + H2O = ADP + phosphate + H(+). Requires micromolar levels of Zn(2+) for activity. Inhibited by millimolar levels of Zn(2+). Its function is as follows. Cyclic-nucleotide phosphodiesterase that acts as a negative regulator of innate immunity by mediating degradation of 2',3'-cGAMP, thereby inhibiting the cGAS-STING signaling. Specifically linearizes 2',3'-cGAMP into 2'5'-bond pGpA and further hydrolyzes pGpA to produce GpA. Also has in vitro nucleotide phosphodiesterase activity with nucleoside triphosphates, such as ATP. Has in vitro activity with p-nitrophenyl-TMP. Has lower activity with nucleoside diphosphates, and no activity with nucleoside monophosphates. Has in vitro activity with CDP-choline, giving rise to CMP and phosphocholine. Has in vitro activity with CDP-ethanolamine. Does not have sphingomyelin phosphodiesterase activity. The chain is Cyclic GMP-AMP phosphodiesterase SMPDL3A from Homo sapiens (Human).